The following is a 194-amino-acid chain: uncharacterized protein (194 aa).

This is an uncharacterized protein from Haemophilus influenzae (strain ATCC 51907 / DSM 11121 / KW20 / Rd).